We begin with the raw amino-acid sequence, 329 residues long: 4-hydroxythreonine-4-phosphate dehydrogenase (329 aa).

His136 and Thr137 together coordinate substrate. A divalent metal cation is bound by residues His166, His211, and His266. Substrate is bound by residues Lys274, Asn283, and Arg292.

The protein belongs to the PdxA family. As to quaternary structure, homodimer. Requires Zn(2+) as cofactor. Mg(2+) is required as a cofactor. Co(2+) serves as cofactor.

It localises to the cytoplasm. The catalysed reaction is 4-(phosphooxy)-L-threonine + NAD(+) = 3-amino-2-oxopropyl phosphate + CO2 + NADH. It participates in cofactor biosynthesis; pyridoxine 5'-phosphate biosynthesis; pyridoxine 5'-phosphate from D-erythrose 4-phosphate: step 4/5. Its function is as follows. Catalyzes the NAD(P)-dependent oxidation of 4-(phosphooxy)-L-threonine (HTP) into 2-amino-3-oxo-4-(phosphooxy)butyric acid which spontaneously decarboxylates to form 3-amino-2-oxopropyl phosphate (AHAP). The chain is 4-hydroxythreonine-4-phosphate dehydrogenase from Escherichia coli O139:H28 (strain E24377A / ETEC).